Here is a 342-residue protein sequence, read N- to C-terminus: Isopentenyl-diphosphate delta-isomerase (342 aa).

Arg12–Lys13 contributes to the substrate binding site. Residues Ala71–Thr73, Ser101, and Asn129 each bind FMN. Ser101–Arg103 contributes to the substrate binding site. A substrate-binding site is contributed by Gln163. Glu164 lines the Mg(2+) pocket. FMN-binding positions include Lys195, Thr225, Gly272–Arg274, and Ala293–Arg294.

It belongs to the IPP isomerase type 2 family. Homooctamer. Dimer of tetramers. It depends on FMN as a cofactor. NADPH is required as a cofactor. The cofactor is Mg(2+).

The protein resides in the cytoplasm. It carries out the reaction isopentenyl diphosphate = dimethylallyl diphosphate. Involved in the biosynthesis of isoprenoids. Catalyzes the 1,3-allylic rearrangement of the homoallylic substrate isopentenyl (IPP) to its allylic isomer, dimethylallyl diphosphate (DMAPP). The protein is Isopentenyl-diphosphate delta-isomerase of Mycolicibacterium gilvum (strain PYR-GCK) (Mycobacterium gilvum (strain PYR-GCK)).